The sequence spans 364 residues: Thebaine 6-O-demethylase (364 aa).

The Fe2OG dioxygenase domain maps to 214-314 (GTQAMRMNYY…RLSIATFHDP (101 aa)). A 2-oxoglutarate-binding site is contributed by Tyr-223. Positions 238, 240, and 295 each coordinate Fe cation. 2-oxoglutarate contacts are provided by Arg-305 and Ser-307.

Belongs to the iron/ascorbate-dependent oxidoreductase family. The cofactor is L-ascorbate. Fe cation serves as cofactor. Mainly expressed in stems and leaves and, to a lower extent, in capsules and roots.

The enzyme catalyses thebaine + 2-oxoglutarate + O2 = neopinone + formaldehyde + succinate + CO2. It carries out the reaction oripavine + 2-oxoglutarate + O2 = neomorphinone + formaldehyde + succinate + CO2. The catalysed reaction is (S)-canadine + S-adenosyl-L-methionine = (S)-cis-N-methylcanadine + S-adenosyl-L-homocysteine. It catalyses the reaction thebaine + 2-oxoglutarate + O2 = 6-O-demethylthebaine + formaldehyde + succinate + CO2 + H(+). It functions in the pathway alkaloid biosynthesis; morphine biosynthesis. Moderate substrate inhibition. Not inhibited in vitro by acylcyclohexanediones. Its function is as follows. Non-heme dioxygenase involved in biosynthesis of morphinan-type benzylisoquinoline and opiate alkaloids natural products. Mediates the conversion of thebaine to neopinone. Also catalyzes, with lower efficiency, the 6-O-demethylation of oripavine to neomorphinone, which is converted spontaneously to morphinone. Supports dealkylation reactions such as O,O-demethylenation in the metabolism of protopine, benzo[c]phenanthridine, and rhoeadine alkaloids; cleaves a methylenedioxy bridge leaving two hydroxyl groups. Catalyzes the O-demethylation of methylenedioxy bridges on protopine alkaloids such as allocryptopine. No activity with (S)-reticuline, salutaridine, papaverine, (S)-corytuberine, (S)-scoulerine, pavine, noscapine or codeine. The sequence is that of Thebaine 6-O-demethylase from Papaver somniferum (Opium poppy).